Here is an 878-residue protein sequence, read N- to C-terminus: Probable LRR receptor-like serine/threonine-protein kinase MEE39 (878 aa).

The first 25 residues, 1 to 25, serve as a signal peptide directing secretion; the sequence is MKNLCWVFLSLFWFGVFLIIRFAEG. Topologically, residues 26-514 are extracellular; the sequence is QNQEGFISLD…IDKPKKKVAV (489 aa). 8 N-linked (GlcNAc...) asparagine glycosylation sites follow: Asn-183, Asn-203, Asn-235, Asn-290, Asn-404, Asn-418, Asn-445, and Asn-466. LRR repeat units follow at residues 413–436, 437–458, and 461–483; these read RIIS…QNLA, HLES…FLAT, and SLLV…LRDR. Residues 515–535 form a helical membrane-spanning segment; the sequence is KVVAPVASIAAIVVVILLFVF. The Cytoplasmic portion of the chain corresponds to 536-878; that stretch reads KKKMSSRNKP…FDTDVKPKAR (343 aa). Thr-557 is subject to Phosphothreonine. A Protein kinase domain is found at 566–840; sequence KNLQRPLGEG…QVIINLKECL (275 aa). ATP-binding positions include 572–580 and Lys-594; that span reads LGEGGFGVV. Tyr-639 bears the Phosphotyrosine mark. Asp-691 (proton acceptor) is an active-site residue. Ser-726 bears the Phosphoserine mark. Phosphothreonine is present on residues Thr-727 and Thr-732. The residue at position 740 (Tyr-740) is a Phosphotyrosine. Residues 849–869 are compositionally biased toward polar residues; sequence RNNQNMDSGHSSDQLNVTVTF. The segment at 849-878 is disordered; the sequence is RNNQNMDSGHSSDQLNVTVTFDTDVKPKAR.

This sequence belongs to the protein kinase superfamily. Ser/Thr protein kinase family.

The protein localises to the membrane. It catalyses the reaction L-seryl-[protein] + ATP = O-phospho-L-seryl-[protein] + ADP + H(+). The enzyme catalyses L-threonyl-[protein] + ATP = O-phospho-L-threonyl-[protein] + ADP + H(+). Functionally, receptor-like serine/threonine-kinase required during the endosperm development in seeds. In Arabidopsis thaliana (Mouse-ear cress), this protein is Probable LRR receptor-like serine/threonine-protein kinase MEE39 (MEE39).